We begin with the raw amino-acid sequence, 241 residues long: Carboxy-S-adenosyl-L-methionine synthase (241 aa).

Residues Y38, G63–S65, D88–N89, D116–I117, N131, and R198 contribute to the S-adenosyl-L-methionine site.

It belongs to the class I-like SAM-binding methyltransferase superfamily. Cx-SAM synthase family. As to quaternary structure, homodimer.

The catalysed reaction is prephenate + S-adenosyl-L-methionine = carboxy-S-adenosyl-L-methionine + 3-phenylpyruvate + H2O. In terms of biological role, catalyzes the conversion of S-adenosyl-L-methionine (SAM) to carboxy-S-adenosyl-L-methionine (Cx-SAM). This Histophilus somni (strain 2336) (Haemophilus somnus) protein is Carboxy-S-adenosyl-L-methionine synthase.